A 284-amino-acid chain; its full sequence is Large ribosomal subunit protein uL2 (284 aa).

The disordered stretch occupies residues 232–284; that stretch reads RGTAMNPVDHPHGGGEGRHNGYIPRTPWGKVTKGLKTRDKRKSNKWIVKDRRK. Positions 240-250 are enriched in basic and acidic residues; that stretch reads DHPHGGGEGRH. The span at 264–284 shows a compositional bias: basic residues; it reads KGLKTRDKRKSNKWIVKDRRK.

The protein belongs to the universal ribosomal protein uL2 family. Part of the 50S ribosomal subunit. Forms a bridge to the 30S subunit in the 70S ribosome.

Functionally, one of the primary rRNA binding proteins. Required for association of the 30S and 50S subunits to form the 70S ribosome, for tRNA binding and peptide bond formation. It has been suggested to have peptidyltransferase activity; this is somewhat controversial. Makes several contacts with the 16S rRNA in the 70S ribosome. The polypeptide is Large ribosomal subunit protein uL2 (Chlamydia abortus (strain DSM 27085 / S26/3) (Chlamydophila abortus)).